Reading from the N-terminus, the 275-residue chain is Homeobox protein Hox-C12a (275 aa).

Disordered stretches follow at residues 101–129 (SREN…DHGM) and 148–213 (QLTQ…KRKP). A compositionally biased stretch (low complexity) spans 155 to 177 (SCQSMESDSSSSLLNEASKPSSS). Polar residues predominate over residues 178 to 194 (DTQTLVSPGSHTGTITA). Residues 207-266 (TRKKRKPYSKLQLAELEGEFMMNEFITRQRRRELSDRLNLSDQQVKIWFQNRRMKKKRLM) constitute a DNA-binding region (homeobox).

Belongs to the Abd-B homeobox family.

The protein localises to the nucleus. Functionally, sequence-specific transcription factor which is part of a developmental regulatory system that provides cells with specific positional identities on the anterior-posterior axis. The sequence is that of Homeobox protein Hox-C12a (hoxc12a) from Takifugu rubripes (Japanese pufferfish).